The sequence spans 120 residues: Ribonuclease P protein component 2 (120 aa).

It belongs to the eukaryotic/archaeal RNase P protein component 2 family. In terms of assembly, consists of a catalytic RNA component and at least 4-5 protein subunits.

It localises to the cytoplasm. The catalysed reaction is Endonucleolytic cleavage of RNA, removing 5'-extranucleotides from tRNA precursor.. In terms of biological role, part of ribonuclease P, a protein complex that generates mature tRNA molecules by cleaving their 5'-ends. The protein is Ribonuclease P protein component 2 of Thermococcus gammatolerans (strain DSM 15229 / JCM 11827 / EJ3).